A 634-amino-acid polypeptide reads, in one-letter code: uncharacterized protein (634 aa).

Residues 1 to 40 form the signal peptide; sequence MWLQQRLKGLPGLLSSSWARRLLCLLGLLVLLLWFASSGA. The Extracellular segment spans residues 41 to 589; that stretch reads RRAAGGLHLP…DEHMAQQDPG (549 aa). A glycan (N-linked (GlcNAc...) asparagine) is linked at Asn-363. The chain crosses the membrane as a helical span at residues 590–610; it reads LPFLFWFSVASLITLFHLFLF. Over 611 to 634 the chain is Cytoplasmic; sequence KLIYNEYCGPGAKPLFRSKEDPSV.

It localises to the membrane. This is an uncharacterized protein from Mus musculus (Mouse).